The chain runs to 373 residues: Erythronate-4-phosphate dehydrogenase (373 aa).

Ser-45 and Thr-67 together coordinate substrate. Residues Asp-147, 207–209 (ASR), and Asp-233 each bind NAD(+). Arg-209 is a catalytic residue. Glu-238 is a catalytic residue. His-255 functions as the Proton donor in the catalytic mechanism. NAD(+) is bound at residue Gly-258.

The protein belongs to the D-isomer specific 2-hydroxyacid dehydrogenase family. PdxB subfamily. As to quaternary structure, homodimer.

The protein resides in the cytoplasm. The enzyme catalyses 4-phospho-D-erythronate + NAD(+) = (R)-3-hydroxy-2-oxo-4-phosphooxybutanoate + NADH + H(+). It functions in the pathway cofactor biosynthesis; pyridoxine 5'-phosphate biosynthesis; pyridoxine 5'-phosphate from D-erythrose 4-phosphate: step 2/5. Functionally, catalyzes the oxidation of erythronate-4-phosphate to 3-hydroxy-2-oxo-4-phosphonooxybutanoate. The protein is Erythronate-4-phosphate dehydrogenase of Pseudoalteromonas translucida (strain TAC 125).